Here is a 161-residue protein sequence, read N- to C-terminus: V-type proton ATPase 16 kDa proteolipid subunit c 2 (161 aa).

At 1–15 (MSYDLETAERAAYAP) the chain is on the lumenal side. Residues 16 to 36 (FFGYMGAASAQIFTVLGAAYG) traverse the membrane as a helical segment. Over 37 to 58 (TAKSAVGICSMGVMRPELIMKS) the chain is Cytoplasmic. Residues 59 to 79 (VIPVIMAGIIGIYGLVVAMVL) traverse the membrane as a helical segment. At 80–98 (KGKVTSASAGYDLNKGFAH) the chain is on the lumenal side. A helical membrane pass occupies residues 99 to 119 (LAAGLTCGLCGLGAGYAIGIV). The Cytoplasmic segment spans residues 120-137 (GDAGVRGTAQQPRLFVGM). A helical membrane pass occupies residues 138–158 (ILILIFSEVLGLYGMIVALIL). The Lumenal portion of the chain corresponds to 159–161 (GTS).

It belongs to the V-ATPase proteolipid subunit family. As to quaternary structure, V-ATPase is a heteromultimeric enzyme made up of two complexes: the ATP-hydrolytic V1 complex and the proton translocation V0 complex. The V1 complex consists of three catalytic AB heterodimers that form a heterohexamer, three peripheral stalks each consisting of EG heterodimers, one central rotor including subunits D and F, and the regulatory subunits C and H. The proton translocation complex V0 consists of the proton transport subunit a, a ring of proteolipid subunits c9c'', rotary subunit d, subunits e and f, and the accessory subunits vah-19/Ac45 and vah-20/PRR. Expressed in the H-shaped excretory cell, rectum, and a pair of cells posterior to the anus.

The protein localises to the membrane. Proton-conducting pore forming subunit of the V0 complex of vacuolar(H+)-ATPase (V-ATPase), a multisubunit enzyme composed of a peripheral complex (V1) that hydrolyzes ATP and a membrane integral complex (V0) that translocates protons. V-ATPase is responsible for acidifying and maintaining the pH of intracellular compartments and in some cell types, is targeted to the plasma membrane, where it is responsible for acidifying the extracellular environment. Involved in necrotic cell death. Required along with other vacuolar ATPase components for the removal of protein aggregates which form in immature oocytes in the distal gonad. This removal occurs as the oocytes mature and move to the proximal gonad, is triggered by the introduction of sperm through mating and occurs before fertilization. The introduction of sperm triggers V-ATPase accumulation in proximal oocytes and induces lysosomal acidification which leads to engulfing of protein aggregates by lysosomes and subsequent clearance of the aggregates. Lysosomal acidification also leads to changes in mitochondrial morphology and function. Mitochondria in distal immature oocytes are fragmented, produce high levels of reactive oxygen species (ROS) and have high membrane potential, indicative of metabolic inactivity. In contrast, mitochondria in proximal mature oocytes are tubular with lower ROS levels and membrane potential, indicative of an active metabolic state required for aggregate mobilization before clearance. In Caenorhabditis elegans, this protein is V-type proton ATPase 16 kDa proteolipid subunit c 2.